Consider the following 952-residue polypeptide: Protein translocase subunit SecA (952 aa).

ATP is bound by residues glutamine 135, 153–157, and aspartate 575; that span reads GEGKT. The segment covering 916–930 has biased composition (low complexity); it reads VSAKAATQPAAPAAK. A disordered region spans residues 916–952; sequence VSAKAATQPAAPAAKEVGRNDPCPCGSGKKYKKCCGK. Cysteine 938, cysteine 940, cysteine 949, and cysteine 950 together coordinate Zn(2+).

It belongs to the SecA family. In terms of assembly, monomer and homodimer. Part of the essential Sec protein translocation apparatus which comprises SecA, SecYEG and auxiliary proteins SecDF. Other proteins may also be involved. The cofactor is Zn(2+).

It localises to the cell membrane. The protein resides in the cytoplasm. It catalyses the reaction ATP + H2O + cellular proteinSide 1 = ADP + phosphate + cellular proteinSide 2.. Functionally, part of the Sec protein translocase complex. Interacts with the SecYEG preprotein conducting channel. Has a central role in coupling the hydrolysis of ATP to the transfer of proteins into and across the cell membrane, serving as an ATP-driven molecular motor driving the stepwise translocation of polypeptide chains across the membrane. This Dehalococcoides mccartyi (strain ATCC BAA-2266 / KCTC 15142 / 195) (Dehalococcoides ethenogenes (strain 195)) protein is Protein translocase subunit SecA.